The sequence spans 344 residues: Dihydroorotate dehydrogenase (quinone) (344 aa).

Residues 64–68 and T88 each bind FMN; that span reads AGLDK. K68 serves as a coordination point for substrate. 113–117 contributes to the substrate binding site; that stretch reads NRMGF. FMN is bound by residues N144 and N177. Residue N177 coordinates substrate. The active-site Nucleophile is S180. N182 contributes to the substrate binding site. Residues K222 and T250 each contribute to the FMN site. Position 251 to 252 (251 to 252) interacts with substrate; sequence NT. Residues G273, G302, and 323–324 each bind FMN; that span reads YS.

The protein belongs to the dihydroorotate dehydrogenase family. Type 2 subfamily. As to quaternary structure, monomer. It depends on FMN as a cofactor.

The protein resides in the cell membrane. It carries out the reaction (S)-dihydroorotate + a quinone = orotate + a quinol. Its pathway is pyrimidine metabolism; UMP biosynthesis via de novo pathway; orotate from (S)-dihydroorotate (quinone route): step 1/1. Catalyzes the conversion of dihydroorotate to orotate with quinone as electron acceptor. The chain is Dihydroorotate dehydrogenase (quinone) from Polynucleobacter asymbioticus (strain DSM 18221 / CIP 109841 / QLW-P1DMWA-1) (Polynucleobacter necessarius subsp. asymbioticus).